Reading from the N-terminus, the 78-residue chain is RNA-binding protein KhpA (78 aa).

The KH domain maps to 29 to 78 (TIIYELSVAKPDIGKIIGKEGRTIKAIRTLLVSVASRNNVRVSLEIMEEK).

The protein belongs to the KhpA RNA-binding protein family.

It localises to the cytoplasm. In terms of biological role, a probable RNA-binding protein. In Chlamydia pneumoniae (Chlamydophila pneumoniae), this protein is RNA-binding protein KhpA.